Here is a 248-residue protein sequence, read N- to C-terminus: Triosephosphate isomerase A (248 aa).

Substrate-binding residues include asparagine 11 and lysine 13. Histidine 95 functions as the Electrophile in the catalytic mechanism. Residue glutamate 165 is the Proton acceptor of the active site.

It belongs to the triosephosphate isomerase family. Homodimer.

It localises to the cytoplasm. The enzyme catalyses dihydroxyacetone phosphate = methylglyoxal + phosphate. It carries out the reaction D-glyceraldehyde 3-phosphate = dihydroxyacetone phosphate. It functions in the pathway carbohydrate degradation; glycolysis; D-glyceraldehyde 3-phosphate from glycerone phosphate: step 1/1. It participates in carbohydrate biosynthesis; gluconeogenesis. Its function is as follows. Triosephosphate isomerase is an extremely efficient metabolic enzyme that catalyzes the interconversion between dihydroxyacetone phosphate (DHAP) and D-glyceraldehyde-3-phosphate (G3P) in glycolysis and gluconeogenesis. In terms of biological role, it is also responsible for the non-negligible production of methylglyoxal a reactive cytotoxic side-product that modifies and can alter proteins, DNA and lipids. This Danio rerio (Zebrafish) protein is Triosephosphate isomerase A (tpi1a).